A 123-amino-acid polypeptide reads, in one-letter code: Small ribosomal subunit protein uS12 (123 aa).

D89 carries the 3-methylthioaspartic acid modification.

Belongs to the universal ribosomal protein uS12 family. Part of the 30S ribosomal subunit. Contacts proteins S8 and S17. May interact with IF1 in the 30S initiation complex.

Its function is as follows. With S4 and S5 plays an important role in translational accuracy. In terms of biological role, interacts with and stabilizes bases of the 16S rRNA that are involved in tRNA selection in the A site and with the mRNA backbone. Located at the interface of the 30S and 50S subunits, it traverses the body of the 30S subunit contacting proteins on the other side and probably holding the rRNA structure together. The combined cluster of proteins S8, S12 and S17 appears to hold together the shoulder and platform of the 30S subunit. This is Small ribosomal subunit protein uS12 from Myxococcus xanthus.